We begin with the raw amino-acid sequence, 264 residues long: uncharacterized protein (264 aa).

8 to 15 (IQGGTGKT) serves as a coordination point for ATP.

This is an uncharacterized protein from Methanocaldococcus jannaschii (strain ATCC 43067 / DSM 2661 / JAL-1 / JCM 10045 / NBRC 100440) (Methanococcus jannaschii).